Reading from the N-terminus, the 1042-residue chain is Probable serine/threonine protein kinase IRE4 (1042 aa).

Composition is skewed to basic and acidic residues over residues 1-10 (MAEENRKDRG), 102-115 (EEIK…GKDE), and 314-327 (QRNE…RRDK). 3 disordered regions span residues 1 to 75 (MAEE…GTKL), 90 to 115 (PPKY…GKDE), and 297 to 327 (WGST…RRDK). The C2H2-type; atypical zinc finger occupies 402-421 (CRICEEEVPLFHLEPHSYIC). One can recognise a Protein kinase domain in the interval 670–955 (FEIIKPISRG…AAEVKSHPFF (286 aa)). ATP-binding positions include 676–684 (ISRGAFGKV) and Lys699. Asp793 (proton acceptor) is an active-site residue. The interval 830-850 (ESDVSPRTNSHHFQKNQEEER) is disordered. Residue Ser854 is modified to Phosphoserine. The AGC-kinase C-terminal domain occupies 956–1042 (QGVDWENLAL…KLFFLLLCVF (87 aa)).

The protein belongs to the protein kinase superfamily. AGC Ser/Thr protein kinase family.

The enzyme catalyses L-seryl-[protein] + ATP = O-phospho-L-seryl-[protein] + ADP + H(+). It catalyses the reaction L-threonyl-[protein] + ATP = O-phospho-L-threonyl-[protein] + ADP + H(+). In Arabidopsis thaliana (Mouse-ear cress), this protein is Probable serine/threonine protein kinase IRE4.